The following is a 675-amino-acid chain: Vitamin K-dependent protein S (675 aa).

The signal sequence occupies residues 1-24 (MRVLSVRFRVLLACLALVLPNSET). Positions 25–41 (NFLSKERASQVLVRKRR) are excised as a propeptide. The Gla domain maps to 42–87 (ANTLLEETKKGNLERECIEELCNKEEAREVFENNPETDYFYPKYLG). 4-carboxyglutamate occurs at positions 47, 48, 55, 57, 60, 61, 66, 67, 70, 73, and 77. Residues cysteine 58 and cysteine 63 are joined by a disulfide bond. Residues 88–116 (CLGAFRVGAFSAARQSANAYPDLRSCVNA) form a thrombin-sensitive region. The region spanning 117 to 155 (IPDQCDPMPCNEDGYLSCKDGQGAFTCICKPGWQGDKCQ) is the EGF-like 1 domain. Cystine bridges form between cysteine 121/cysteine 134, cysteine 126/cysteine 143, cysteine 145/cysteine 154, cysteine 161/cysteine 175, cysteine 171/cysteine 184, cysteine 186/cysteine 199, cysteine 205/cysteine 217, cysteine 212/cysteine 226, cysteine 228/cysteine 241, cysteine 247/cysteine 256, cysteine 252/cysteine 265, cysteine 267/cysteine 282, and cysteine 449/cysteine 475. Aspartate 136 carries the (3R)-3-hydroxyaspartate modification. The 44-residue stretch at 157 to 200 (DINECKDPSNINGGCSQTCDNTPGSYHCSCKIGFAMLTNKKDCK) folds into the EGF-like 2; calcium-binding domain. The region spanning 201 to 242 (DVDECSLKPSVCGTAVCKNIPGDFECECPNGYRYDPSSKSCK) is the EGF-like 3; calcium-binding domain. Residues 243–283 (DVDECSENTCAQLCVNYPGGYSCYCDGKKGFKLAQDQRSCE) enclose the EGF-like 4; calcium-binding domain. Laminin G-like domains lie at 299–475 (LLYL…NKHC) and 484–665 (YYPG…AHSC). N-linked (GlcNAc...) asparagine glycans are attached at residues asparagine 499 and asparagine 509.

Post-translationally, the iron and 2-oxoglutarate dependent 3-hydroxylation of aspartate and asparagine is (R) stereospecific within EGF domains. In terms of tissue distribution, plasma.

It localises to the secreted. In terms of biological role, anticoagulant plasma protein; it is a cofactor to activated protein C in the degradation of coagulation factors Va and VIIIa. It helps to prevent coagulation and stimulating fibrinolysis. This is Vitamin K-dependent protein S (Pros1) from Rattus norvegicus (Rat).